We begin with the raw amino-acid sequence, 285 residues long: Flagellar filament 30.7 kDa core protein (285 aa).

It belongs to the bacterial flagellin family. The core of the flagellum consists of several antigenically related polypeptides. Post-translationally, glycosylated. Glycosylation is not essential for motility.

It is found in the periplasmic flagellum. Its subcellular location is the periplasm. Its function is as follows. Component of the core of the flagella. The polypeptide is Flagellar filament 30.7 kDa core protein (flaB3) (Treponema maltophilum).